Reading from the N-terminus, the 876-residue chain is Alanine--tRNA ligase (876 aa).

Zn(2+)-binding residues include histidine 564, histidine 568, cysteine 666, and histidine 670.

This sequence belongs to the class-II aminoacyl-tRNA synthetase family. In terms of assembly, homotetramer. Requires Zn(2+) as cofactor.

It is found in the cytoplasm. The catalysed reaction is tRNA(Ala) + L-alanine + ATP = L-alanyl-tRNA(Ala) + AMP + diphosphate. Its function is as follows. Catalyzes the attachment of alanine to tRNA(Ala) in a two-step reaction: alanine is first activated by ATP to form Ala-AMP and then transferred to the acceptor end of tRNA(Ala). Also edits incorrectly charged Ser-tRNA(Ala) and Gly-tRNA(Ala) via its editing domain. This Salmonella choleraesuis (strain SC-B67) protein is Alanine--tRNA ligase.